A 137-amino-acid chain; its full sequence is Large ribosomal subunit protein uL16 (137 aa).

It belongs to the universal ribosomal protein uL16 family. In terms of assembly, part of the 50S ribosomal subunit.

In terms of biological role, binds 23S rRNA and is also seen to make contacts with the A and possibly P site tRNAs. The protein is Large ribosomal subunit protein uL16 of Roseobacter denitrificans (strain ATCC 33942 / OCh 114) (Erythrobacter sp. (strain OCh 114)).